The primary structure comprises 253 residues: 3-deoxy-manno-octulosonate cytidylyltransferase (253 aa).

Belongs to the KdsB family.

It localises to the cytoplasm. The catalysed reaction is 3-deoxy-alpha-D-manno-oct-2-ulosonate + CTP = CMP-3-deoxy-beta-D-manno-octulosonate + diphosphate. It functions in the pathway nucleotide-sugar biosynthesis; CMP-3-deoxy-D-manno-octulosonate biosynthesis; CMP-3-deoxy-D-manno-octulosonate from 3-deoxy-D-manno-octulosonate and CTP: step 1/1. The protein operates within bacterial outer membrane biogenesis; lipopolysaccharide biosynthesis. In terms of biological role, activates KDO (a required 8-carbon sugar) for incorporation into bacterial lipopolysaccharide in Gram-negative bacteria. This is 3-deoxy-manno-octulosonate cytidylyltransferase from Neisseria meningitidis serogroup B (strain ATCC BAA-335 / MC58).